Reading from the N-terminus, the 165-residue chain is Endoribonuclease YbeY (165 aa).

Zn(2+) is bound by residues His-130, His-134, and His-140.

This sequence belongs to the endoribonuclease YbeY family. Zn(2+) is required as a cofactor.

The protein localises to the cytoplasm. Functionally, single strand-specific metallo-endoribonuclease involved in late-stage 70S ribosome quality control and in maturation of the 3' terminus of the 16S rRNA. The chain is Endoribonuclease YbeY from Streptococcus thermophilus (strain CNRZ 1066).